We begin with the raw amino-acid sequence, 282 residues long: Stress response regulator protein 1 (282 aa).

2 stretches are compositionally biased toward low complexity: residues 12–30 (NLSR…HSST) and 45–58 (NSQS…SNNN). 3 disordered regions span residues 12–31 (NLSR…SSTV), 43–84 (DINS…DDED), and 112–139 (LTPF…TTVV). A compositionally biased stretch (polar residues) spans 66–77 (SDYNSYTHNQYY). Residues 125-139 (SIISSKSSNKSTTVV) are compositionally biased toward low complexity. The Response regulatory domain occupies 155-273 (SFLIVDDNII…LDFMANSIDD (119 aa)). Aspartate 206 carries the post-translational modification 4-aspartylphosphate.

Its function is as follows. Required for stress adaptation, morphogenesis and virulence. The polypeptide is Stress response regulator protein 1 (SRR1) (Candida albicans (strain SC5314 / ATCC MYA-2876) (Yeast)).